The primary structure comprises 254 residues: GTP cyclohydrolase III (254 aa).

It belongs to the archaeal-type GTP cyclohydrolase family.

The catalysed reaction is GTP + 3 H2O = 2-amino-5-formylamino-6-(5-phospho-D-ribosylamino)pyrimidin-4(3H)-one + 2 phosphate + 2 H(+). Catalyzes the formation of 2-amino-5-formylamino-6-ribofuranosylamino-4(3H)-pyrimidinone ribonucleotide monophosphate and inorganic phosphate from GTP. Also has an independent pyrophosphate phosphohydrolase activity. The sequence is that of GTP cyclohydrolase III from Methanobrevibacter smithii (strain ATCC 35061 / DSM 861 / OCM 144 / PS).